We begin with the raw amino-acid sequence, 153 residues long: FAD synthase (153 aa).

Residues Thr9 to Phe10, His14 to His17, Asp97, and Tyr124 each bind ATP.

Belongs to the archaeal FAD synthase family. In terms of assembly, homodimer. Requires a divalent metal cation as cofactor.

The enzyme catalyses FMN + ATP + H(+) = FAD + diphosphate. It participates in cofactor biosynthesis; FAD biosynthesis; FAD from FMN: step 1/1. Functionally, catalyzes the transfer of the AMP portion of ATP to flavin mononucleotide (FMN) to produce flavin adenine dinucleotide (FAD) coenzyme. The sequence is that of FAD synthase from Methanobrevibacter smithii (strain ATCC 35061 / DSM 861 / OCM 144 / PS).